Reading from the N-terminus, the 147-residue chain is Large ribosomal subunit protein bL9 (147 aa).

It belongs to the bacterial ribosomal protein bL9 family.

Binds to the 23S rRNA. The chain is Large ribosomal subunit protein bL9 from Mycoplasmoides gallisepticum (strain R(low / passage 15 / clone 2)) (Mycoplasma gallisepticum).